We begin with the raw amino-acid sequence, 205 residues long: uncharacterized protein (205 aa).

It to M.jannaschii MJ0638 and MJ1252 and M.tuberculosis Rv2003c.

This is an uncharacterized protein from Methanocaldococcus jannaschii (strain ATCC 43067 / DSM 2661 / JAL-1 / JCM 10045 / NBRC 100440) (Methanococcus jannaschii).